Consider the following 880-residue polypeptide: DNA-directed RNA polymerase subunit Rpo1N (880 aa).

8 residues coordinate Zn(2+): cysteine 58, cysteine 61, cysteine 68, histidine 71, cysteine 98, cysteine 101, cysteine 146, and cysteine 149. Mg(2+) contacts are provided by aspartate 456, aspartate 458, and aspartate 460. Residues arginine 573, cysteine 575, cysteine 580, histidine 582, and serine 584 each contribute to the Zn(2+) site.

This sequence belongs to the RNA polymerase beta' chain family. In terms of assembly, part of the 13-subunit RNA polymerase complex. Interacts with TFS4. As to quaternary structure, (Microbial infection) Binds viral protein RIP, which blocks global transcription. Mg(2+) is required as a cofactor. It depends on Zn(2+) as a cofactor.

The protein resides in the cytoplasm. It carries out the reaction RNA(n) + a ribonucleoside 5'-triphosphate = RNA(n+1) + diphosphate. (Microbial infection) Binds to viral protein RIP (AC Q3V4R7), which inhibits global transcription. In terms of biological role, DNA-dependent RNA polymerase (RNAP) catalyzes the transcription of DNA into RNA using the four ribonucleoside triphosphates as substrates. Forms the clamp head domain. The sequence is that of DNA-directed RNA polymerase subunit Rpo1N from Sulfolobus acidocaldarius (strain ATCC 33909 / DSM 639 / JCM 8929 / NBRC 15157 / NCIMB 11770).